A 311-amino-acid polypeptide reads, in one-letter code: Probable deoxyhypusine synthase (311 aa).

Lys-284 serves as the catalytic Nucleophile.

This sequence belongs to the deoxyhypusine synthase family. It depends on NAD(+) as a cofactor.

It catalyses the reaction [eIF5A protein]-L-lysine + spermidine = [eIF5A protein]-deoxyhypusine + propane-1,3-diamine. It functions in the pathway protein modification; eIF5A hypusination. In terms of biological role, catalyzes the NAD-dependent oxidative cleavage of spermidine and the subsequent transfer of the butylamine moiety of spermidine to the epsilon-amino group of a specific lysine residue of the eIF-5A precursor protein to form the intermediate deoxyhypusine residue. In Sulfolobus acidocaldarius (strain ATCC 33909 / DSM 639 / JCM 8929 / NBRC 15157 / NCIMB 11770), this protein is Probable deoxyhypusine synthase.